A 159-amino-acid polypeptide reads, in one-letter code: Growth arrest and DNA damage-inducible protein GADD45 gamma (159 aa).

A homodimerization region spans residues 43–86 (VYESAKVLNVDPDNVTFCVLAADEEDEGDIALQIHFTLIQAFCC).

Belongs to the GADD45 family. Undergoes concentration-dependent homodimerization, which is required for growth inhibititory activity and enhances interaction with PCNA. Interacts with GADD45GIP1. Interacts with PCNA.

Its function is as follows. Involved in the regulation of growth and apoptosis. Mediates activation of stress-responsive MTK1/MEKK4 MAPKKK. The polypeptide is Growth arrest and DNA damage-inducible protein GADD45 gamma (GADD45G) (Bos taurus (Bovine)).